The chain runs to 419 residues: UDP-N-acetylglucosamine 1-carboxyvinyltransferase (419 aa).

22–23 (KN) provides a ligand contact to phosphoenolpyruvate. Arginine 93 serves as a coordination point for UDP-N-acetyl-alpha-D-glucosamine. Catalysis depends on cysteine 117, which acts as the Proton donor. Residue cysteine 117 is modified to 2-(S-cysteinyl)pyruvic acid O-phosphothioketal. UDP-N-acetyl-alpha-D-glucosamine-binding residues include aspartate 306 and isoleucine 328.

The protein belongs to the EPSP synthase family. MurA subfamily.

It is found in the cytoplasm. It catalyses the reaction phosphoenolpyruvate + UDP-N-acetyl-alpha-D-glucosamine = UDP-N-acetyl-3-O-(1-carboxyvinyl)-alpha-D-glucosamine + phosphate. The protein operates within cell wall biogenesis; peptidoglycan biosynthesis. Cell wall formation. Adds enolpyruvyl to UDP-N-acetylglucosamine. This Idiomarina loihiensis (strain ATCC BAA-735 / DSM 15497 / L2-TR) protein is UDP-N-acetylglucosamine 1-carboxyvinyltransferase.